Here is a 400-residue protein sequence, read N- to C-terminus: Cytohesin-3 (400 aa).

Residues 14-61 (EDLSLEEREELLDIRRRKKELIDDIERLKYEIAEVMTEIDNLTSVEES) adopt a coiled-coil conformation. An SEC7 domain is found at 77–206 (FNMDPKKGIQ…IIMLNTSLHN (130 aa)). A PH domain is found at 265–381 (PDREGWLLKL…WMKSIKASIS (117 aa)). Residues 273-281 (KLGGGRVKT), Arg-285, Tyr-296, Arg-306, and Asn-355 contribute to the a 1,2-diacyl-sn-glycero-3-phospho-(1D-myo-inositol-3,4,5-trisphosphate) site. Residues 392 to 400 (RKRRIANKK) are C-terminal autoinhibitory region.

As to quaternary structure, interacts with TAMALIN. In terms of tissue distribution, present in all tissues tested, with highest protein levels in brain and adrenal.

The protein resides in the cytoplasm. It localises to the cytosol. Its subcellular location is the cell membrane. In terms of biological role, promotes guanine-nucleotide exchange on ARF1. Promotes the activation of ARF factors through replacement of GDP with GTP. The chain is Cytohesin-3 (Cyth3) from Rattus norvegicus (Rat).